The sequence spans 253 residues: Acidic 26 kDa endochitinase (253 aa).

A signal peptide spans 1-24 (MKFNIVSPVALSCLFFLFLTGTLA). E92 acts as the Proton donor in catalysis. Cysteines 212 and 244 form a disulfide.

This sequence belongs to the glycosyl hydrolase 19 family. Chitinase class II subfamily.

Its subcellular location is the secreted. It localises to the extracellular space. The enzyme catalyses Random endo-hydrolysis of N-acetyl-beta-D-glucosaminide (1-&gt;4)-beta-linkages in chitin and chitodextrins.. Its function is as follows. Defense against chitin-containing fungal pathogens. The protein is Acidic 26 kDa endochitinase (CHI3) of Solanum lycopersicum (Tomato).